The chain runs to 227 residues: tRNA (guanine-N(1)-)-methyltransferase (227 aa).

S-adenosyl-L-methionine contacts are provided by residues Gly-111 and Leu-135–Leu-140.

The protein belongs to the RNA methyltransferase TrmD family. Homodimer.

Its subcellular location is the cytoplasm. It carries out the reaction guanosine(37) in tRNA + S-adenosyl-L-methionine = N(1)-methylguanosine(37) in tRNA + S-adenosyl-L-homocysteine + H(+). Its function is as follows. Specifically methylates guanosine-37 in various tRNAs. This Leifsonia xyli subsp. xyli (strain CTCB07) protein is tRNA (guanine-N(1)-)-methyltransferase.